A 523-amino-acid polypeptide reads, in one-letter code: Beta-glucosidase 31 (523 aa).

A signal peptide spans 1 to 22; it reads MTPARVVFICCVVLLAAAAAAA. A beta-D-glucoside-binding positions include Gln49, His149, and 194–195; that span reads NE. Glu195 serves as the catalytic Proton donor. Cys214 and Cys223 are joined by a disulfide. An N-linked (GlcNAc...) asparagine glycan is attached at Asn227. A beta-D-glucoside contacts are provided by Tyr339 and Glu413. The active-site Nucleophile is Glu413. N-linked (GlcNAc...) asparagine glycosylation is present at Asn450. Residues Trp460, 467 to 468, and Phe476 each bind a beta-D-glucoside; that span reads EY.

The protein belongs to the glycosyl hydrolase 1 family.

It catalyses the reaction Hydrolysis of terminal, non-reducing beta-D-glucosyl residues with release of beta-D-glucose.. This Oryza sativa subsp. japonica (Rice) protein is Beta-glucosidase 31 (BGLU31).